The chain runs to 176 residues: ATP-dependent protease subunit HslV (176 aa).

Residue Thr2 is part of the active site. Na(+) is bound by residues Gly157, Cys160, and Thr163.

The protein belongs to the peptidase T1B family. HslV subfamily. As to quaternary structure, a double ring-shaped homohexamer of HslV is capped on each side by a ring-shaped HslU homohexamer. The assembly of the HslU/HslV complex is dependent on binding of ATP.

It is found in the cytoplasm. The catalysed reaction is ATP-dependent cleavage of peptide bonds with broad specificity.. Its activity is regulated as follows. Allosterically activated by HslU binding. Its function is as follows. Protease subunit of a proteasome-like degradation complex believed to be a general protein degrading machinery. The polypeptide is ATP-dependent protease subunit HslV (Pseudomonas fluorescens (strain ATCC BAA-477 / NRRL B-23932 / Pf-5)).